Consider the following 264-residue polypeptide: Acyl-[acyl-carrier-protein]--UDP-N-acetylglucosamine O-acyltransferase (264 aa).

This sequence belongs to the transferase hexapeptide repeat family. LpxA subfamily. In terms of assembly, homotrimer.

The protein resides in the cytoplasm. The catalysed reaction is a (3R)-hydroxyacyl-[ACP] + UDP-N-acetyl-alpha-D-glucosamine = a UDP-3-O-[(3R)-3-hydroxyacyl]-N-acetyl-alpha-D-glucosamine + holo-[ACP]. It participates in glycolipid biosynthesis; lipid IV(A) biosynthesis; lipid IV(A) from (3R)-3-hydroxytetradecanoyl-[acyl-carrier-protein] and UDP-N-acetyl-alpha-D-glucosamine: step 1/6. Involved in the biosynthesis of lipid A, a phosphorylated glycolipid that anchors the lipopolysaccharide to the outer membrane of the cell. The chain is Acyl-[acyl-carrier-protein]--UDP-N-acetylglucosamine O-acyltransferase from Actinobacillus pleuropneumoniae serotype 7 (strain AP76).